A 228-amino-acid polypeptide reads, in one-letter code: Phosphoribosylformylglycinamidine synthase subunit PurQ (228 aa).

A Glutamine amidotransferase type-1 domain is found at 4–226 (AVVVFPGSNC…VNYWRETHVV (223 aa)). Cysteine 86 (nucleophile) is an active-site residue. Active-site residues include histidine 195 and glutamate 197.

As to quaternary structure, part of the FGAM synthase complex composed of 1 PurL, 1 PurQ and 2 PurS subunits.

The protein localises to the cytoplasm. It catalyses the reaction N(2)-formyl-N(1)-(5-phospho-beta-D-ribosyl)glycinamide + L-glutamine + ATP + H2O = 2-formamido-N(1)-(5-O-phospho-beta-D-ribosyl)acetamidine + L-glutamate + ADP + phosphate + H(+). The catalysed reaction is L-glutamine + H2O = L-glutamate + NH4(+). It functions in the pathway purine metabolism; IMP biosynthesis via de novo pathway; 5-amino-1-(5-phospho-D-ribosyl)imidazole from N(2)-formyl-N(1)-(5-phospho-D-ribosyl)glycinamide: step 1/2. Functionally, part of the phosphoribosylformylglycinamidine synthase complex involved in the purines biosynthetic pathway. Catalyzes the ATP-dependent conversion of formylglycinamide ribonucleotide (FGAR) and glutamine to yield formylglycinamidine ribonucleotide (FGAM) and glutamate. The FGAM synthase complex is composed of three subunits. PurQ produces an ammonia molecule by converting glutamine to glutamate. PurL transfers the ammonia molecule to FGAR to form FGAM in an ATP-dependent manner. PurS interacts with PurQ and PurL and is thought to assist in the transfer of the ammonia molecule from PurQ to PurL. The sequence is that of Phosphoribosylformylglycinamidine synthase subunit PurQ from Geobacillus kaustophilus (strain HTA426).